Here is a 153-residue protein sequence, read N- to C-terminus: Bacteriohemerythrin (153 aa).

The Fe cation site is built by His21, His57, Glu61, His76, His80, His115, and Asp120.

The protein belongs to the hemerythrin family. As to quaternary structure, monomer.

Functionally, oxygen-binding protein. May be involved in a storage mechanism or for delivery to oxygen-requiring enzymes. The oxygen-binding site contains two iron atoms. The chain is Bacteriohemerythrin from Pseudomonas paraeruginosa (strain DSM 24068 / PA7) (Pseudomonas aeruginosa (strain PA7)).